Here is an 847-residue protein sequence, read N- to C-terminus: MKMADRSGKIIPGQAYIEVEYDYEYEAKDRKIVIKQGERYILVKKTNDDWWQVKPDENSKAFYVPAQYVKEVTRKALMPPVKQVAGLPNNSTKIMQSLHLQRSTENVNKLPELSSFGKPSSSVQGTGLTRDANQNFGPSYNPGHTVNLSLDLTHNNGKFNNDSHSPKVSSQNRTRLFGHFPGPEFLDVEKTSFSQEQSCDSAGEGSERIHQDSESGDELSSSSTEQIRATTPPNQGRPDSPVYANLQELKISQSALPPLPGSPAIQINGEWETHKDSSGRCYYYDRGTQERTWKPPRWTRDASISKGDFQSPGDQELLSSEENYYSTSYSQSDSQCGSPPRGWSEELDERGHTLYTSDYTNEKWLKHIDDQGRQYYYSADGSRSEWELPKYNASSQQQREIIKSRSLDRRLQEPIVLTKWRHSTIVLDTNDKESPTASKPCFPENESSPSSPKHQDTASSPKDQEKYGLLNVTKIAENGKKVRKNWLSSWAVLQGSSLLFTKTQGSSTSWFGSNQSKPEFTVDLKGATIEMASKDKSSKKNVFELKTRQGTELLIQSDNDTVINDWFKVLSSTINNQAVDTDEGIEEEILPDSPGIEKHDKEKEQKDPKKLRSFKVSSIDSSEQKKTKKNLKKFLTRRPTLQAVREKGYIKDQVFGSNLANLCQRENGTVPKFVKLCIEHVEEYGLDVDGIYRVSGNLAVIQKLRFAVNHDEKLDLNDSKWEDIHVITGALKMFFRELPEPLFTFNHFNDFVNAIKQEPRQRVAAVKDLIRQLPKPNQDTMQILFRHLKRVVENGEKNRMTYQSIAIVFGPTLLKPEKETGNIAVHTVYQNQIVELILLELSSIFGR.

An SH3 domain is found at 12-74 (PGQAYIEVEY…PAQYVKEVTR (63 aa)). Positions 110–241 (LPELSSFGKP…PPNQGRPDSP (132 aa)) are disordered. 2 stretches are compositionally biased toward polar residues: residues 117–174 (GKPS…QNRT) and 191–200 (TSFSQEQSCD). Ser-165 is modified (phosphoserine). Residues Ser-201, Ser-213, and Ser-215 each carry the phosphoserine modification. A compositionally biased stretch (polar residues) spans 224–234 (TEQIRATTPPN). 2 positions are modified to phosphothreonine: Thr-230 and Thr-231. Ser-240 carries the post-translational modification Phosphoserine. Position 243 is a phosphotyrosine (Tyr-243). WW domains follow at residues 265–298 (IQIN…PPRW) and 358–391 (DYTN…LPKY). The disordered stretch occupies residues 293-317 (WKPPRWTRDASISKGDFQSPGDQEL). 2 disordered regions span residues 428–466 (DTND…DQEK) and 591–625 (PDSP…SEQK). Polar residues predominate over residues 445-461 (NESSPSSPKHQDTASSP). The 113-residue stretch at 463-575 (DQEKYGLLNV…WFKVLSSTIN (113 aa)) folds into the PH domain. Ser-593 carries the post-translational modification Phosphoserine. Basic and acidic residues predominate over residues 595-610 (GIEKHDKEKEQKDPKK). One can recognise a Rho-GAP domain in the interval 657–845 (SNLANLCQRE…LILLELSSIF (189 aa)).

Its function is as follows. GTPase activator for the Rho-type GTPases by converting them to an inactive GDP-bound state. The protein is Rho GTPase-activating protein 12 (ARHGAP12) of Macaca fascicularis (Crab-eating macaque).